A 380-amino-acid polypeptide reads, in one-letter code: Beta-1,3-N-acetylglucosaminyltransferase lunatic fringe (380 aa).

The Cytoplasmic portion of the chain corresponds to 1 to 8 (MLKRCGRR). A helical; Signal-anchor for type II membrane protein membrane pass occupies residues 9-29 (LLLALAGALLACLLVLTADPP). Residues 30 to 380 (PPPVPAERGR…TSWCPRSAIF (351 aa)) are Lumenal-facing. The tract at residues 85–110 (SRRDVGPPPGGAPRPADGPPRPLAEP) is disordered. A compositionally biased stretch (pro residues) spans 90 to 107 (GPPPGGAPRPADGPPRPL). R130 contacts substrate. N-linked (GlcNAc...) asparagine glycosylation occurs at N168. 2 disulfides stabilise this stretch: C169–C180 and C198–C261. D202 lines the substrate pocket. D203 serves as a coordination point for Mn(2+). Residue D291 is part of the active site. Position 315 (H315) interacts with Mn(2+). C365 and C374 form a disulfide bridge.

This sequence belongs to the glycosyltransferase 31 family. Requires Mn(2+) as cofactor. It depends on Co(2+) as a cofactor. In terms of processing, a soluble form may be derived from the membrane form by proteolytic processing.

The protein resides in the golgi apparatus. It is found in the golgi apparatus membrane. The catalysed reaction is 3-O-(alpha-L-fucosyl)-L-threonyl-[EGF-like domain protein] + UDP-N-acetyl-alpha-D-glucosamine = 3-O-(N-acetyl-beta-D-glucosaminyl-(1-&gt;3)-alpha-L-fucosyl)-L-threonyl-[EGF-like domain protein] + UDP + H(+). It carries out the reaction 3-O-(alpha-L-fucosyl)-L-seryl-[EGF-like domain protein] + UDP-N-acetyl-alpha-D-glucosamine = 3-O-(N-acetyl-beta-D-glucosaminyl-(1-&gt;3)-alpha-L-fucosyl)-L-seryl-[EGF-like domain protein] + UDP + H(+). Its function is as follows. Glycosyltransferase that initiates the elongation of O-linked fucose residues attached to EGF-like repeats in the extracellular domain of Notch molecules. Modulates NOTCH1 activity by modifying O-fucose residues at specific EGF-like domains resulting in inhibition of NOTCH1 activation by JAG1 and enhancement of NOTCH1 activation by DLL1 via an increase in its binding to DLL1. Decreases the binding of JAG1 to NOTCH2 but not that of DLL1. Essential mediator of somite segmentation and patterning. The protein is Beta-1,3-N-acetylglucosaminyltransferase lunatic fringe (LFNG) of Bos taurus (Bovine).